Consider the following 101-residue polypeptide: Urease subunit beta (101 aa).

Belongs to the urease beta subunit family. As to quaternary structure, heterotrimer of UreA (gamma), UreB (beta) and UreC (alpha) subunits. Three heterotrimers associate to form the active enzyme.

The protein localises to the cytoplasm. It catalyses the reaction urea + 2 H2O + H(+) = hydrogencarbonate + 2 NH4(+). It participates in nitrogen metabolism; urea degradation; CO(2) and NH(3) from urea (urease route): step 1/1. This Granulibacter bethesdensis (strain ATCC BAA-1260 / CGDNIH1) protein is Urease subunit beta.